The primary structure comprises 515 residues: Recombining binding protein suppressor of hairless-like protein (515 aa).

Positions 1 to 40 (MDPRETTDPSLPPGPLTHLSLPDSSEVRLQSDGPSLLGSW) are disordered. DNA-binding regions lie at residues 76 to 86 (QKSYGNEKRFF), 191 to 196 (SKPSQK), and 218 to 223 (RLRSQT). In terms of domain architecture, IPT/TIG spans 384-474 (PLISTLELSG…YPSPFSFTYT (91 aa)).

Belongs to the Su(H) family. As to quaternary structure, interacts weakly with EBNA2. Does not interact with any Notch proteins. Highly expressed in lung. Also detected in spleen, and brain.

The protein localises to the nucleus. Putative transcription factor, which cooperates with EBNA2 to activate transcription. The protein is Recombining binding protein suppressor of hairless-like protein (Rbpjl) of Mus musculus (Mouse).